The following is a 208-amino-acid chain: Small ribosomal subunit protein uS4 (208 aa).

Positions Y28–S48 are disordered. The S4 RNA-binding domain occupies M95–A159.

The protein belongs to the universal ribosomal protein uS4 family. Part of the 30S ribosomal subunit. Contacts protein S5. The interaction surface between S4 and S5 is involved in control of translational fidelity.

One of the primary rRNA binding proteins, it binds directly to 16S rRNA where it nucleates assembly of the body of the 30S subunit. Its function is as follows. With S5 and S12 plays an important role in translational accuracy. In Beutenbergia cavernae (strain ATCC BAA-8 / DSM 12333 / CCUG 43141 / JCM 11478 / NBRC 16432 / NCIMB 13614 / HKI 0122), this protein is Small ribosomal subunit protein uS4.